A 360-amino-acid chain; its full sequence is Phosphate acyltransferase (360 aa).

Residues 296–305 (STLRREHLDR) are compositionally biased toward basic and acidic residues. Residues 296 to 360 (STLRREHLDR…LRTAEPPGSL (65 aa)) are disordered. Over residues 314-333 (PRQRRRPRRQKRRAACRPRP) the composition is skewed to basic residues. Residues 334 to 350 (RSAAGRAPGSGVRGAAG) show a composition bias toward low complexity.

It belongs to the PlsX family. As to quaternary structure, homodimer. Probably interacts with PlsY.

The protein localises to the cytoplasm. The catalysed reaction is a fatty acyl-[ACP] + phosphate = an acyl phosphate + holo-[ACP]. Its pathway is lipid metabolism; phospholipid metabolism. Its function is as follows. Catalyzes the reversible formation of acyl-phosphate (acyl-PO(4)) from acyl-[acyl-carrier-protein] (acyl-ACP). This enzyme utilizes acyl-ACP as fatty acyl donor, but not acyl-CoA. This is Phosphate acyltransferase from Deinococcus radiodurans (strain ATCC 13939 / DSM 20539 / JCM 16871 / CCUG 27074 / LMG 4051 / NBRC 15346 / NCIMB 9279 / VKM B-1422 / R1).